The sequence spans 49 residues: Large ribosomal subunit protein bL33A (49 aa).

It belongs to the bacterial ribosomal protein bL33 family.

This is Large ribosomal subunit protein bL33A from Bacillus licheniformis (strain ATCC 14580 / DSM 13 / JCM 2505 / CCUG 7422 / NBRC 12200 / NCIMB 9375 / NCTC 10341 / NRRL NRS-1264 / Gibson 46).